A 65-amino-acid polypeptide reads, in one-letter code: Putative beta-neurotoxin RjAa4 (65 aa).

In terms of domain architecture, LCN-type CS-alpha/beta spans 1 to 64 (KEGYPMGRDG…VWDSSTNKCG (64 aa)). Intrachain disulfides connect cysteine 11–cysteine 63, cysteine 15–cysteine 37, cysteine 22–cysteine 44, and cysteine 26–cysteine 46.

It belongs to the long (4 C-C) scorpion toxin superfamily. Sodium channel inhibitor family. Beta subfamily. In terms of tissue distribution, expressed by the venom gland.

It is found in the secreted. In terms of biological role, beta toxins bind voltage-independently at site-4 of sodium channels (Nav) and shift the voltage of activation toward more negative potentials thereby affecting sodium channel activation and promoting spontaneous and repetitive firing. This is Putative beta-neurotoxin RjAa4 from Rhopalurus junceus (Caribbean blue scorpion).